The sequence spans 167 residues: Transmembrane protein 220 (167 aa).

The next 5 helical transmembrane spans lie at Pro-10–Val-30, Trp-40–Val-60, Val-69–Leu-89, Glu-104–Ser-122, and Met-130–His-150.

Its subcellular location is the membrane. The chain is Transmembrane protein 220 (Tmem220) from Mus musculus (Mouse).